The chain runs to 1392 residues: L-2-aminoadipate reductase (1392 aa).

K541 is covalently cross-linked (Glycyl lysine isopeptide (Lys-Gly) (interchain with G-Cter in ubiquitin)). The region spanning 843–920 is the Carrier domain; it reads SQFTNVEREV…AFAAEIDRIK (78 aa). S880 is modified (O-(pantetheine 4'-phosphoryl)serine). A Glycyl lysine isopeptide (Lys-Gly) (interchain with G-Cter in ubiquitin) cross-link involves residue K1276.

It belongs to the ATP-dependent AMP-binding enzyme family. Pantetheine 4'-phosphate serves as cofactor.

It carries out the reaction (S)-2-amino-6-oxohexanoate + NADP(+) + H2O = L-2-aminoadipate + NADPH + 2 H(+). It catalyses the reaction (S)-2-amino-6-oxohexanoate + NAD(+) + H2O = L-2-aminoadipate + NADH + 2 H(+). The enzyme catalyses (S)-2-amino-6-oxohexanoate + AMP + diphosphate + NADP(+) = L-2-aminoadipate + ATP + NADPH + H(+). Its pathway is amino-acid biosynthesis; L-lysine biosynthesis via AAA pathway; L-lysine from L-alpha-aminoadipate (fungal route): step 1/3. In terms of biological role, catalyzes the activation of alpha-aminoadipate by ATP-dependent adenylation and the reduction of activated alpha-aminoadipate by NADPH. The activated alpha-aminoadipate is bound to the phosphopantheinyl group of the enzyme itself before it is reduced to (S)-2-amino-6-oxohexanoate. The protein is L-2-aminoadipate reductase (LYS2) of Saccharomyces cerevisiae (strain ATCC 204508 / S288c) (Baker's yeast).